Here is a 692-residue protein sequence, read N- to C-terminus: ATP-dependent DNA helicase DinG (692 aa).

The 278-residue stretch at 16 to 293 (NLGNQLDNFI…AELAEYKKAA (278 aa)) folds into the Helicase ATP-binding domain. Residue 56–63 (AGTGIGKS) coordinates ATP. Residue Cys123 participates in [4Fe-4S] cluster binding. The DEAH box signature appears at 134–137 (NNDQ). [4Fe-4S] cluster contacts are provided by Cys192 and Cys202. The DEAH box signature appears at 247–250 (DEAH). Residues 514-692 (LIKTLPEYLE…PPFKRVIEYS (179 aa)) form the Helicase C-terminal domain.

Belongs to the helicase family. DinG subfamily. Type 1 sub-subfamily. [4Fe-4S] cluster serves as cofactor.

It catalyses the reaction Couples ATP hydrolysis with the unwinding of duplex DNA at the replication fork by translocating in the 5'-3' direction. This creates two antiparallel DNA single strands (ssDNA). The leading ssDNA polymer is the template for DNA polymerase III holoenzyme which synthesizes a continuous strand.. It carries out the reaction ATP + H2O = ADP + phosphate + H(+). DNA-dependent ATPase and 5'-3' DNA helicase. Unwinds D-loops, R-loops, forked DNA and G-quadruplex DNA. This Photobacterium profundum (strain SS9) protein is ATP-dependent DNA helicase DinG.